Here is a 125-residue protein sequence, read N- to C-terminus: S-adenosylmethionine decarboxylase proenzyme (125 aa).

Serine 63 functions as the Schiff-base intermediate with substrate; via pyruvic acid in the catalytic mechanism. Pyruvic acid (Ser); by autocatalysis is present on serine 63. The active-site Proton acceptor; for processing activity is histidine 68. Cysteine 83 serves as the catalytic Proton donor; for catalytic activity.

The protein belongs to the prokaryotic AdoMetDC family. Type 1 subfamily. Heterotetramer of two alpha and two beta chains arranged as a dimer of alpha/beta heterodimers. It depends on pyruvate as a cofactor. Post-translationally, is synthesized initially as an inactive proenzyme. Formation of the active enzyme involves a self-maturation process in which the active site pyruvoyl group is generated from an internal serine residue via an autocatalytic post-translational modification. Two non-identical subunits are generated from the proenzyme in this reaction, and the pyruvate is formed at the N-terminus of the alpha chain, which is derived from the carboxyl end of the proenzyme. The post-translation cleavage follows an unusual pathway, termed non-hydrolytic serinolysis, in which the side chain hydroxyl group of the serine supplies its oxygen atom to form the C-terminus of the beta chain, while the remainder of the serine residue undergoes an oxidative deamination to produce ammonia and the pyruvoyl group blocking the N-terminus of the alpha chain.

The catalysed reaction is S-adenosyl-L-methionine + H(+) = S-adenosyl 3-(methylsulfanyl)propylamine + CO2. Its pathway is amine and polyamine biosynthesis; S-adenosylmethioninamine biosynthesis; S-adenosylmethioninamine from S-adenosyl-L-methionine: step 1/1. In terms of biological role, catalyzes the decarboxylation of S-adenosylmethionine to S-adenosylmethioninamine (dcAdoMet), the propylamine donor required for the synthesis of the polyamines spermine and spermidine from the diamine putrescine. The chain is S-adenosylmethionine decarboxylase proenzyme from Moorella thermoacetica (strain ATCC 39073 / JCM 9320).